The chain runs to 1222 residues: MSLPERPGASQAYNQRSVYRNSPSRRSRPVDIETGGYHAVDNQASHQRGKSGSSFAESIGINSNTESMPLSPTSPDGQSRHAGPEQPISRKRSLIRPERNRIDRDHRNYHYHKHAAHMNVLPSSTGNDPIYEDFEASTERTNSNYNEGGSDGSPRQRRTVSGDHEKSAAVASTLPTPDRTKSGKIKRKSRRHSKPPKRIEEQLRPPTFWNVYCAIVTFWAPGFIMKCCGMPTRAQQRAWREKMGLISIILIIMAIVGFLTFGFTATVCGAPQERLRVNKVDGGNMIFHGVAYDLSESHHPPAQGMPLRSDGLGPNVLYDLPEKNAGKDGSFLFQNVNGRCKGLITLAKGSDVPTNDDGDLAWYFPCKTFNQDGSSKVNTTTPYYSGYGCHTTLDSRNAFYLDLKGAADVYFTWDDIKNKSRNLVVYSGNVLDLDLLKWFNSTQVDIPERFKELRDKNSAVNKAIRGRDVTRMFQSSSDKKYAQCFEEIIKVGSVDTETIGCIASKIVLYCALALILSVVGVRFFLAIIFQWFICRKYAPTKTSQSSDRRKRNKQIEDWSEDIYRAPIRLPGDVGSTVYGSSDRSSKRASFLPTTSRFSSVGGPDIRSQGGRRMPTTMASQSTSNQLLTPNSMFKQGNDSRASFLRTDPYSSTPTDGPGPAGFIHDAVVPQPPSDWMPFGFPLAHTMCLVTAYSEGEEGIRTTLDSIATTDYPNSHKVIVVICDGIIKGQGETMSTPDVCLGMLKDHSIPPDMVEPFSYVAVASGSKRHNMAKIYCGFYDYGKNSRIPADRQQRVPMMVVVKCGTPDEASKSKPGNRGKRDSQIILMSFLQKVMFDERMTELEYEMFNGLWKVTGISPDYYEIILMVDADTKVFPDSLTHMISAMVKDPEIMGLCGETKIANKRDSWVTAIQVFEYFVSHHLAKSFESVFGGVTCLPGCFCMYRIKAPKGGHNYWVPILANPDIVEHYSENVVETLHEKNLYLLGEDRFLTTLMLRTFPKRKQVFIPQAVCKTTVPDEFMVLLSQRRRWINSTIHNLMELVLVRDLCGTFCFSMQFIIFVELVGTLVLPAAIAFTFYVVITSIINSPPQIIPLVLLGLILGLPGLLVIITAHSWSYIVWMLIYLLALPIWNFVLPTYAFWKFDDFSWGETRKTAGEKTKKAGLEYEGEFDSSKITMKRWAEFERDKRSRSGYWGSRENVIGGGGQTWTSPPGHQYNEEYYSDA.

Disordered stretches follow at residues 1–101 and 138–200; these read MSLP…ERNR and TERT…KRIE. Composition is skewed to polar residues over residues 11-24 and 42-77; these read QAYN…NSPS and NQAS…SPDG. Positions 182 to 196 are enriched in basic residues; it reads SGKIKRKSRRHSKPP. 2 consecutive transmembrane segments (helical) span residues 205–225 and 243–263; these read PPTF…GFIM and MGLI…TFGF. N-linked (GlcNAc...) asparagine glycosylation is found at Asn378, Asn418, and Asn440. Residues 513-533 traverse the membrane as a helical segment; sequence ALILSVVGVRFFLAIIFQWFI. Positions 576–630 are disordered; sequence TVYGSSDRSSKRASFLPTTSRFSSVGGPDIRSQGGRRMPTTMASQSTSNQLLTPN. The segment covering 616-630 has biased composition (polar residues); that stretch reads TMASQSTSNQLLTPN. Asn637 and Asn1030 each carry an N-linked (GlcNAc...) asparagine glycan. 3 helical membrane passes run 1055-1075, 1089-1109, and 1113-1133; these read FIIF…AFTF, IIPL…VIIT, and WSYI…NFVL. Positions 1202–1222 are disordered; that stretch reads GGQTWTSPPGHQYNEEYYSDA.

The protein belongs to the chitin synthase family. Class IV subfamily.

The protein localises to the cell membrane. The catalysed reaction is [(1-&gt;4)-N-acetyl-beta-D-glucosaminyl](n) + UDP-N-acetyl-alpha-D-glucosamine = [(1-&gt;4)-N-acetyl-beta-D-glucosaminyl](n+1) + UDP + H(+). In terms of biological role, polymerizes chitin, a structural polymer of the cell wall and septum, by transferring the sugar moiety of UDP-GlcNAc to the non-reducing end of the growing chitin polymer. Shows additive effects in septum formation with CHS1, CHS2, CHS3A, CHS5, CHS6 and CHS7. Regulates conidiation. Involved in virulence and mediates mycotoxin deoxinivalenol (DON) biosynthesis via the regulation of the expression of TRI4, TRI5 and TRI6. This is Chitin synthase 4 from Gibberella zeae (strain ATCC MYA-4620 / CBS 123657 / FGSC 9075 / NRRL 31084 / PH-1) (Wheat head blight fungus).